Reading from the N-terminus, the 1346-residue chain is Zinc finger protein 541 (1346 aa).

Disordered regions lie at residues 1–34 and 113–136; these read MDQY…DTLN and EADE…SSPQ. The segment covering 21 to 32 has biased composition (polar residues); that stretch reads FSESQGLNCSDT. C2H2-type zinc fingers lie at residues 140-162, 168-190, and 196-220; these read LDCS…YLTH, HVCK…MLTH, and FVCI…YEVH. Disordered regions lie at residues 235 to 271, 283 to 328, 437 to 472, and 578 to 744; these read ACGD…LLPH, VHQK…AAPA, SAVP…EDAL, and SQLP…GGYR. 2 stretches are compositionally biased toward low complexity: residues 294–323 and 440–458; these read PAGA…PAGP and PSRE…SPSE. Positions 671–685 are enriched in polar residues; sequence PDISSLAKQLRSSKG. The C2H2-type 4 zinc-finger motif lies at 838–860; it reads FVCKNCSQMFYTEKGLSSHMCFH. Positions 931 to 971 are disordered; it reads AMGQEKDGEERDSKESSQQRKRKKRPPPSTAGEPGPAGCHQ. Positions 934–948 are enriched in basic and acidic residues; the sequence is QEKDGEERDSKESSQ. Residues 1053-1145 enclose the ELM2 domain; sequence PHINIGSRFQ…VALETLLLRG (93 aa). The 52-residue stretch at 1160–1211 folds into the SANT domain; it reads TGSDVWTPIEKRLFKKAFYAHKKDFYLIHKMIQTKTVAQCVEYYYIWKKMIK. The tract at residues 1224–1281 is disordered; it reads VKREPEEVERTEEKVPCSPRERPSHHPTPKLKTKSYRRESILSSSPNAGSKRTPELLG. Residues 1234 to 1247 show a composition bias toward basic and acidic residues; sequence TEEKVPCSPRERPS. The segment covering 1248–1258 has biased composition (basic residues); it reads HHPTPKLKTKS. Over residues 1264–1273 the composition is skewed to polar residues; the sequence is ILSSSPNAGS. The C2H2-type 5 zinc finger occupies 1289–1311; that stretch reads FPCRECERVFDKIKSRNAHMKRH.

Interacts with DNTTIP1. Identified in a complex with KCDT19, HDAC1 and HSPA2. Component of a histone deacetylase complex containing DNTTIP1, ZNF541, HDAC1 and HDAC2. Identified in a complex with HDAC1, HDAC2, DNTTIP1 and KCTD19.

The protein localises to the nucleus. Functionally, transcription regulator which is essential for male fertility and for the completion of meiotic prophase in spermatocytes. Regulates progression of the pachytene stage of meiotic prophase by activating the expression of genes involved in meiosis during spermatogenesis. Maintains the repression of pre-pachytene transcriptional programs, including meiotic double-strand breaks (DSB) formation genes in pachytene spermatocytes and suppresses aberrant DSB formation after mid-pachytene, thus ensuring meiosis progression. The chain is Zinc finger protein 541 (ZNF541) from Homo sapiens (Human).